A 389-amino-acid chain; its full sequence is Chalcone synthase 6 (389 aa).

Residue Cys164 is part of the active site.

The protein belongs to the thiolase-like superfamily. Chalcone/stilbene synthases family.

The enzyme catalyses (E)-4-coumaroyl-CoA + 3 malonyl-CoA + 3 H(+) = 2',4,4',6'-tetrahydroxychalcone + 3 CO2 + 4 CoA. It functions in the pathway secondary metabolite biosynthesis; flavonoid biosynthesis. Functionally, the primary product of this enzyme is 4,2',4',6'-tetrahydroxychalcone (also termed naringenin-chalcone or chalcone) which can under specific conditions spontaneously isomerize into naringenin. This Trifolium subterraneum (Subterranean clover) protein is Chalcone synthase 6 (CHS6).